A 456-amino-acid polypeptide reads, in one-letter code: Adenylosuccinate lyase (456 aa).

Residues 15-16 (RY), 90-92 (NHD), and 122-123 (TS) each bind N(6)-(1,2-dicarboxyethyl)-AMP. The active-site Proton donor/acceptor is H171. Residue Q247 participates in N(6)-(1,2-dicarboxyethyl)-AMP binding. S295 functions as the Proton donor/acceptor in the catalytic mechanism. N(6)-(1,2-dicarboxyethyl)-AMP contacts are provided by residues S296, 301–303 (KVN), N309, R335, and 340–344 (STVLR).

It belongs to the lyase 1 family. Adenylosuccinate lyase subfamily. As to quaternary structure, homotetramer. Residues from neighboring subunits contribute catalytic and substrate-binding residues to each active site.

The enzyme catalyses N(6)-(1,2-dicarboxyethyl)-AMP = fumarate + AMP. It carries out the reaction (2S)-2-[5-amino-1-(5-phospho-beta-D-ribosyl)imidazole-4-carboxamido]succinate = 5-amino-1-(5-phospho-beta-D-ribosyl)imidazole-4-carboxamide + fumarate. It participates in purine metabolism; AMP biosynthesis via de novo pathway; AMP from IMP: step 2/2. It functions in the pathway purine metabolism; IMP biosynthesis via de novo pathway; 5-amino-1-(5-phospho-D-ribosyl)imidazole-4-carboxamide from 5-amino-1-(5-phospho-D-ribosyl)imidazole-4-carboxylate: step 2/2. In terms of biological role, catalyzes two reactions in de novo purine nucleotide biosynthesis. Catalyzes the breakdown of 5-aminoimidazole- (N-succinylocarboxamide) ribotide (SAICAR or 2-[5-amino-1-(5-phospho-beta-D-ribosyl)imidazole-4-carboxamido]succinate) to 5-aminoimidazole-4-carboxamide ribotide (AICAR or 5-amino-1-(5-phospho-beta-D-ribosyl)imidazole-4-carboxamide) and fumarate, and of adenylosuccinate (ADS or N(6)-(1,2-dicarboxyethyl)-AMP) to adenosine monophosphate (AMP) and fumarate. The polypeptide is Adenylosuccinate lyase (purB) (Buchnera aphidicola subsp. Acyrthosiphon pisum (strain APS) (Acyrthosiphon pisum symbiotic bacterium)).